The sequence spans 431 residues: Enolase (431 aa).

(2R)-2-phosphoglycerate is bound at residue Gln-167. Glu-209 serves as the catalytic Proton donor. Residues Asp-246, Glu-289, and Asp-316 each contribute to the Mg(2+) site. 4 residues coordinate (2R)-2-phosphoglycerate: Lys-341, Arg-370, Ser-371, and Lys-392. Lys-341 functions as the Proton acceptor in the catalytic mechanism.

This sequence belongs to the enolase family. In terms of assembly, component of the RNA degradosome, a multiprotein complex involved in RNA processing and mRNA degradation. It depends on Mg(2+) as a cofactor.

It is found in the cytoplasm. It localises to the secreted. Its subcellular location is the cell surface. The enzyme catalyses (2R)-2-phosphoglycerate = phosphoenolpyruvate + H2O. It functions in the pathway carbohydrate degradation; glycolysis; pyruvate from D-glyceraldehyde 3-phosphate: step 4/5. Catalyzes the reversible conversion of 2-phosphoglycerate (2-PG) into phosphoenolpyruvate (PEP). It is essential for the degradation of carbohydrates via glycolysis. The protein is Enolase of Shewanella sediminis (strain HAW-EB3).